Reading from the N-terminus, the 125-residue chain is UPF0332 protein AF_0298 (125 aa).

It belongs to the UPF0332 family.

This is UPF0332 protein AF_0298 from Archaeoglobus fulgidus (strain ATCC 49558 / DSM 4304 / JCM 9628 / NBRC 100126 / VC-16).